A 484-amino-acid chain; its full sequence is Schwannomin-interacting protein 1 (484 aa).

The span at 1-28 (MERSEQRVRAAWDCDPGKQADRDYREDG) shows a compositional bias: basic and acidic residues. Disordered regions lie at residues 1–74 (MERS…VSAL), 86–220 (KKVI…PPMD), 232–258 (QFRE…ERES), and 305–350 (SGSD…ESLD). Low complexity predominate over residues 33 to 67 (SDAGSSSSSRASSQSNSTKVTPCSECKSSSSPGGS). The segment covering 92–106 (WAPEEDGEEEEEEDD) has biased composition (acidic residues). Positions 107 to 120 (RGYRDDGCPAREPG) are enriched in basic and acidic residues. A compositionally biased stretch (low complexity) spans 123–137 (SARIGSSGSGSRSAA). A compositionally biased stretch (basic and acidic residues) spans 150-159 (HPHDPQDLRH). Polar residues predominate over residues 239 to 252 (RNQGQARTNSTSAQ). The segment covering 306-320 (GSDKDSDADDSKTET) has biased composition (basic and acidic residues). Positions 321 to 332 (SLDTPLSPMSKQ) are enriched in polar residues. Residues 341 to 350 (TTEEESESLD) show a composition bias toward acidic residues. A coiled-coil region spans residues 421–455 (IGQLQVIVNDLHSQIESLNEELVQLLLIRDELHTE).

This sequence belongs to the SCHIP1 family. In terms of assembly, homooligomer (via coiled coil domain). Interacts with NF2; the interaction is direct. Interacts with ANK3.

The polypeptide is Schwannomin-interacting protein 1 (Mus musculus (Mouse)).